The sequence spans 693 residues: Sister chromatid cohesion 1 protein 3 (693 aa).

Disordered stretches follow at residues 167-250, 262-361, 460-511, and 545-573; these read IPMD…PGTV, DLSP…KNFD, PVSP…TFDN, and TQSG…GQRN. Composition is skewed to basic and acidic residues over residues 178 to 201 and 232 to 243; these read VSRH…EPRD and TEERIPNSERND. Positions 264–277 are enriched in polar residues; it reads SPTSHPSFAAQQQD. Positions 278-295 are enriched in basic and acidic residues; sequence VRVERTESLDETLNEKEP. The span at 316–325 shows a compositional bias: low complexity; sequence RSGSPGSAAG. Composition is skewed to polar residues over residues 465–483 and 545–564; these read PDST…QQTE and TQSG…TSTV.

This sequence belongs to the rad21 family. As to quaternary structure, component of the cohesin complex. As to expression, low expression in shoots, buds, siliques, leaves and roots. Found in, but not limited to, actively dividing cells: in procambium, protoderm and ground meristem in roots, and in shoot and floral meristems.

It is found in the nucleus. In terms of biological role, may be involved in sister chromatid cohesion during mitosis. This is Sister chromatid cohesion 1 protein 3 (SYN3) from Arabidopsis thaliana (Mouse-ear cress).